The sequence spans 1302 residues: 1-phosphatidylinositol 4,5-bisphosphate phosphodiesterase gamma-1 (1302 aa).

The residue at position 2 (Ala2) is an N-acetylalanine. Residues 27–142 (RSLEVGTVMT…WIKGLTWLME (116 aa)) form the PH 1 domain. In terms of domain architecture, EF-hand spans 152 to 187 (QIERWLRKQFYSVDRNREDRISAKDLKNMLSQVNYR). Positions 165, 167, 169, 171, and 176 each coordinate Ca(2+). The region spanning 320–464 (DTMNNPLSHY…LRRKILIKHK (145 aa)) is the PI-PLC X-box domain. Catalysis depends on residues His335 and His380. Residues 489-523 (SIKNGILYLEDPVNHEWYPHYFVLTSSKIYYSEET) form the PH 2; first part domain. A Phosphotyrosine modification is found at Tyr506. Residues 522-545 (ETSSDQGNEDEEEPKEASSSTELH) form a disordered region. SH2 domains follow at residues 550 to 657 (WFHG…SEPV) and 668 to 756 (WYHA…RYPI). Tyr771 carries the phosphotyrosine; by SYK modification. Tyr775 bears the Phosphotyrosine mark. Tyr783 carries the post-translational modification Phosphotyrosine; by ITK, SYK and TXK. Residues 791-851 (TFKCAVKALF…PSNYVEEMIN (61 aa)) enclose the SH3 domain. The PH 2; second part domain occupies 895-931 (FVFSISMPSVAQWSLDVAADSQEELQDWVKKIREVAQ). The 118-residue stretch at 953–1070 (LSELVVYCRP…GYVLQPSTMR (118 aa)) folds into the PI-PLC Y-box domain. At Tyr977 the chain carries Phosphotyrosine. Positions 1071–1194 (DEAFDPFDKS…TGYRAVPLKN (124 aa)) constitute a C2 domain. A phosphoserine mark is found at Ser1221, Ser1227, Ser1233, and Ser1248. Tyr1253 is modified (phosphotyrosine). A Phosphoserine modification is found at Ser1263.

Interacts (via SH2 domain) with FGFR1, FGFR2, FGFR3 and FGFR4 (phosphorylated). Interacts with RALGPS1. Interacts (via SH2 domains) with VIL1 (phosphorylated at C-terminus tyrosine phosphorylation sites). Interacts (via SH2 domain) with RET. Interacts with AGAP2 via its SH3 domain. Interacts with LAT (phosphorylated) upon TCR activation. Interacts (via SH3 domain) with the Pro-rich domain of TNK1. Associates with BLNK, VAV1, GRB2 and NCK1 in a B-cell antigen receptor-dependent fashion. Interacts with CBLB in activated T-cells; which inhibits phosphorylation. Interacts with SHB. Interacts (via SH3 domain) with the Arg/Gly-rich-flanked Pro-rich domains of KHDRBS1/SAM68. This interaction is selectively regulated by arginine methylation of KHDRBS1/SAM68. Interacts with INPP5D/SHIP1, THEMIS and CLNK. Interacts with FLT4 and KIT. Interacts with AXL. Interacts with SYK; activates PLCG1. Interacts with FLT1 (tyrosine-phosphorylated). Interacts (via SH2 domain) with PDGFRA and PDGFRB (tyrosine phosphorylated). Interacts with PIP5K1C. Interacts with NTRK1 and NTRK2 (phosphorylated upon ligand-binding). Interacts with TESPA1. Interacts with GRB2, LAT and THEMIS upon TCR activation in thymocytes; the association is weaker in the absence of TESPA1. Interacts (via C-terminal proline-rich domain (PRD)) with PLCG1 (via SH3 domain); this interaction leads to guanine nucleotide exchange from PlCG1 to DNM1 and enhances DNM1-dependent endocytosis. Requires Ca(2+) as cofactor. In terms of processing, tyrosine phosphorylated in response to signaling via activated FLT3, KIT and PDGFRA. Tyrosine phosphorylated by activated FGFR1, FGFR2, FGFR3 and FGFR4. Tyrosine phosphorylated by activated FLT1 and KDR. Tyrosine phosphorylated by activated PDGFRB. The receptor-mediated activation of PLCG1 involves its phosphorylation by tyrosine kinases in response to ligation of a variety of growth factor receptors and immune system receptors. For instance, SYK phosphorylates and activates PLCG1 in response to ligation of the B-cell receptor. Phosphorylated by ITK and TXK on Tyr-783 upon TCR activation in T-cells. May be dephosphorylated by PTPRJ. Ubiquitinated by CBLB in activated T-cells.

It is found in the cell projection. It localises to the lamellipodium. The protein localises to the ruffle. It carries out the reaction a 1,2-diacyl-sn-glycero-3-phospho-(1D-myo-inositol-4,5-bisphosphate) + H2O = 1D-myo-inositol 1,4,5-trisphosphate + a 1,2-diacyl-sn-glycerol + H(+). The enzyme catalyses a 1,2-diacyl-sn-glycero-3-phospho-(1D-myo-inositol) + H2O = 1D-myo-inositol 1-phosphate + a 1,2-diacyl-sn-glycerol + H(+). With respect to regulation, activated by phosphorylation on tyrosine residues. Its function is as follows. Mediates the production of the second messenger molecules diacylglycerol (DAG) and inositol 1,4,5-trisphosphate (IP3). Plays an important role in the regulation of intracellular signaling cascades. Becomes activated in response to ligand-mediated activation of receptor-type tyrosine kinases, such as PDGFRA, PDGFRB, EGFR, FGFR1, FGFR2, FGFR3 and FGFR4. Plays a role in actin reorganization and cell migration. Guanine nucleotide exchange factor that binds the GTPase DNM1 and catalyzes the dissociation of GDP, allowing a GTP molecule to bind in its place, therefore enhancing DNM1-dependent endocytosis. This is 1-phosphatidylinositol 4,5-bisphosphate phosphodiesterase gamma-1 from Mus musculus (Mouse).